The following is an 87-amino-acid chain: RNA-binding protein Hfq (87 aa).

Positions 9–68 constitute a Sm domain; sequence DPFLNTLRRERIPVSIYLVNGIKLQGYIESFDQFVILLKNSISQMIYKHAISTVVPNHTN. The disordered stretch occupies residues 66–87; the sequence is HTNNQEHNQSQYNNNNACISKP.

The protein belongs to the Hfq family. Homohexamer.

Functionally, RNA chaperone that binds small regulatory RNA (sRNAs) and mRNAs to facilitate mRNA translational regulation in response to envelope stress, environmental stress and changes in metabolite concentrations. Also binds with high specificity to tRNAs. The sequence is that of RNA-binding protein Hfq from Wigglesworthia glossinidia brevipalpis.